The chain runs to 80 residues: Sec-independent protein translocase protein TatA (80 aa).

The helical transmembrane segment at 1 to 21 (MGISMWQLLIVLLIIVLLFGT) threads the bilayer. A disordered region spans residues 39 to 80 (KKAMSDGESEEDKEPKKLSQNESRTIEGSVERNDAKTESKHS). The segment covering 67-80 (SVERNDAKTESKHS) has biased composition (basic and acidic residues).

The protein belongs to the TatA/E family. The Tat system comprises two distinct complexes: a TatABC complex, containing multiple copies of TatA, TatB and TatC subunits, and a separate TatA complex, containing only TatA subunits. Substrates initially bind to the TatABC complex, which probably triggers association of the separate TatA complex to form the active translocon.

It localises to the cell inner membrane. Part of the twin-arginine translocation (Tat) system that transports large folded proteins containing a characteristic twin-arginine motif in their signal peptide across membranes. TatA could form the protein-conducting channel of the Tat system. This is Sec-independent protein translocase protein TatA from Hahella chejuensis (strain KCTC 2396).